Here is a 143-residue protein sequence, read N- to C-terminus: Type II secretion system core protein G (143 aa).

Residues 1 to 8 constitute a propeptide, leader sequence; sequence MQKRRQSG. Phe-9 is subject to N-methylphenylalanine. The helical transmembrane segment at 9–29 threads the bilayer; that stretch reads FTLLEVMVVIVILGILASLVV. Residues 70–92 form a disordered region; the sequence is QGLDALVNKPTAAPEPRSYRDGG.

The protein belongs to the GSP G family. Type II secretion system is composed of four main components: the outer membrane complex, the inner membrane complex, the cytoplasmic secretion ATPase and the periplasm-spanning pseudopilus. Forms homomultimers. In terms of processing, cleaved by the prepilin peptidase. Methylated by prepilin peptidase at the amino group of the N-terminal phenylalanine once the leader sequence is cleaved.

The protein localises to the cell inner membrane. Core component of the type II secretion system required for the energy-dependent secretion of extracellular factors such as proteases and toxins from the periplasm. Pseudopilin (pilin-like) protein that polymerizes to form the pseudopilus. Further polymerization triggers pseudopilus growth. The sequence is that of Type II secretion system core protein G (exeG) from Aeromonas hydrophila.